A 667-amino-acid polypeptide reads, in one-letter code: Acyl-coenzyme A oxidase acox-3 (667 aa).

FAD is bound by residues 138-141, 146-147, Gly178, Arg313, 334-337, and Gly410; these read FCLT, GS, and QQYR. Residue Glu433 is the Proton acceptor of the active site. Position 435 (Glu435) interacts with FAD. Positions 665–667 match the Microbody targeting signal motif; sequence SKL.

Belongs to the acyl-CoA oxidase family. In terms of assembly, homodimer. Requires FAD as cofactor. As to expression, expressed in intestine.

Its subcellular location is the peroxisome. The catalysed reaction is IC-asc-C7-CoA + O2 = IC-asc-DeltaC7-CoA + H2O2. It carries out the reaction IC-asc-C9-CoA + O2 = IC-asc-DeltaC9-CoA + H2O2. It catalyses the reaction asc-C13-CoA + O2 = asc-DeltaC13-CoA + H2O2. It participates in lipid metabolism; peroxisomal fatty acid beta-oxidation. Its activity is regulated as follows. In contrast to other acyl-coenzyme A oxidases which bind to and are activated by ATP, does not bind ATP. Functionally, involved in the first step of peroxisomal beta-oxidation by catalyzing the desaturation of fatty acid-derived side chains of ascaroside pheromones, which regulates development and behavior. Specifically, shortens indol-3-carbonyl(IC)-ascarosides with 7-carbon (IC-asc-C7) or 9-carbon (IC-asc-C9) side chains and contributes to the shortening of ascarosides with 13-carbon (asc-C13) and 15-carbon (asc-C15) side chains. This chain is Acyl-coenzyme A oxidase acox-3, found in Caenorhabditis elegans.